Consider the following 797-residue polypeptide: Outer membrane protein assembly factor BamA (797 aa).

The signal sequence occupies residues 1-21 (MKLKQIASALMMLGISPLALA). POTRA domains lie at 23 to 90 (FTIQ…VIER), 91 to 171 (PTIG…IDEG), 174 to 262 (AKIT…VHEG), 265 to 344 (FRWG…IEPG), and 347 to 421 (IYVN…LTER).

The protein belongs to the BamA family. In terms of assembly, part of the Bam complex.

The protein resides in the cell outer membrane. Part of the outer membrane protein assembly complex, which is involved in assembly and insertion of beta-barrel proteins into the outer membrane. The protein is Outer membrane protein assembly factor BamA of Neisseria meningitidis serogroup B (strain ATCC BAA-335 / MC58).